The following is a 371-amino-acid chain: Flagellar P-ring protein (371 aa).

The signal sequence occupies residues 1–21 (MSRSFFATVLGLALAAMTVMA).

It belongs to the FlgI family. As to quaternary structure, the basal body constitutes a major portion of the flagellar organelle and consists of four rings (L,P,S, and M) mounted on a central rod.

The protein resides in the periplasm. The protein localises to the bacterial flagellum basal body. Assembles around the rod to form the L-ring and probably protects the motor/basal body from shearing forces during rotation. The sequence is that of Flagellar P-ring protein from Caulobacter sp. (strain K31).